The following is a 264-amino-acid chain: Thymidylate synthase (264 aa).

Arg-21 lines the dUMP pocket. His-51 is a (6R)-5,10-methylene-5,6,7,8-tetrahydrofolate binding site. 126–127 (RR) serves as a coordination point for dUMP. Cys-146 serves as the catalytic Nucleophile. DUMP-binding positions include 166–169 (RSAD), Asn-177, and 207–209 (HLY). Residue Asp-169 coordinates (6R)-5,10-methylene-5,6,7,8-tetrahydrofolate. Ser-263 contacts (6R)-5,10-methylene-5,6,7,8-tetrahydrofolate.

Belongs to the thymidylate synthase family. Bacterial-type ThyA subfamily. In terms of assembly, homodimer.

The protein resides in the cytoplasm. The enzyme catalyses dUMP + (6R)-5,10-methylene-5,6,7,8-tetrahydrofolate = 7,8-dihydrofolate + dTMP. It functions in the pathway pyrimidine metabolism; dTTP biosynthesis. Catalyzes the reductive methylation of 2'-deoxyuridine-5'-monophosphate (dUMP) to 2'-deoxythymidine-5'-monophosphate (dTMP) while utilizing 5,10-methylenetetrahydrofolate (mTHF) as the methyl donor and reductant in the reaction, yielding dihydrofolate (DHF) as a by-product. This enzymatic reaction provides an intracellular de novo source of dTMP, an essential precursor for DNA biosynthesis. In Neisseria meningitidis serogroup A / serotype 4A (strain DSM 15465 / Z2491), this protein is Thymidylate synthase.